The following is a 135-amino-acid chain: uncharacterized protein (135 aa).

The interval 100–125 (KESPATSSEDISSCSDCDSERLQSDD) is disordered. Residues 106–115 (SSEDISSCSD) are compositionally biased toward low complexity.

This is an uncharacterized protein from Microplitis demolitor (Parasitoid wasp).